Here is a 364-residue protein sequence, read N- to C-terminus: Tyrosyl-DNA phosphodiesterase 2 (364 aa).

An N-acetylmethionine modification is found at Met1. Residues 1–10 (MERNSGPEAG) are compositionally biased toward low complexity. Positions 1 to 21 (MERNSGPEAGPEAELEEGEPE) are disordered. Residue Lys23 forms a Glycyl lysine isopeptide (Lys-Gly) (interchain with G-Cter in SUMO2) linkage. The tract at residues 68-108 (ESASESRPESLSEPGSCVDLTKEETNDSISSKTSTSEDKSV) is disordered. A phosphothreonine; by ACVR1B mark is found at Thr88 and Thr92. At Ser95 the chain carries Phosphoserine. The interval 122–126 (NIDGL) is interaction with 5' end of substrate DNA. The Mg(2+) site is built by Asp124 and Glu154. The segment at 228–233 (HLESTR) is interaction with 5' end of substrate DNA. Asp264 (proton donor/acceptor) is an active-site residue. The interaction with 5' end of substrate DNA stretch occupies residues 266–268 (NLR).

It belongs to the CCR4/nocturin family. As to quaternary structure, interacts with TRAF2, TRAF3, TRAF5, TRAF6, TNFRSF8/CD30, TNFRSF5/CD40, TNFRSF1B/TNF-R75, ETS1, ETS2, FLI1, SMAD3 and ACVR1B/ALK4. Mg(2+) serves as cofactor. The cofactor is Mn(2+). Post-translationally, ubiquitinated by TRAF6.

The protein resides in the nucleus. It is found in the PML body. It localises to the nucleolus. Its subcellular location is the cytoplasm. DNA repair enzyme that can remove a variety of covalent adducts from DNA through hydrolysis of a 5'-phosphodiester bond, giving rise to DNA with a free 5' phosphate. Catalyzes the hydrolysis of dead-end complexes between DNA and the topoisomerase 2 (TOP2) active site tyrosine residue. The 5'-tyrosyl DNA phosphodiesterase activity can enable the repair of TOP2-induced DNA double-strand breaks/DSBs without the need for nuclease activity, creating a 'clean' DSB with 5'-phosphate termini that are ready for ligation. Thereby, protects the transcription of many genes involved in neurological development and maintenance from the abortive activity of TOP2. Hydrolyzes 5'-phosphoglycolates on protruding 5' ends on DSBs due to DNA damage by radiation and free radicals. Has preference for single-stranded DNA or duplex DNA with a 4 base pair overhang as substrate. Also has 3'-tyrosyl DNA phosphodiesterase activity, but less efficiently and much slower than TDP1. Constitutes the major if not only 5'-tyrosyl-DNA phosphodiesterase in cells. Also acts as an adapter by participating in the specific activation of MAP3K7/TAK1 in response to TGF-beta: associates with components of the TGF-beta receptor-TRAF6-TAK1 signaling module and promotes their ubiquitination dependent complex formation. Involved in non-canonical TGF-beta induced signaling routes. May also act as a negative regulator of ETS1 and may inhibit NF-kappa-B activation. Acts as a regulator of ribosome biogenesis following stress. In Bos taurus (Bovine), this protein is Tyrosyl-DNA phosphodiesterase 2 (TDP2).